The following is a 204-amino-acid chain: Dof zinc finger protein DOF3.1 (204 aa).

Positions 1 to 25 (MQDPAAYYQTMMAKQQQQQQPQFAE) are disordered. A Dof-type zinc finger spans residues 29–83 (LKCPRCDSPNTKFCYYNNYNLSQPRHFCKSCRRYWTKGGALRNVPVGGGSRKNAT). Zn(2+) is bound by residues cysteine 31, cysteine 34, cysteine 56, and cysteine 59. Disordered regions lie at residues 70–128 (RNVP…TRML) and 182–204 (RTEP…AEKN). The span at 84 to 102 (KRSTSSSSSASSPSNSSQN) shows a compositional bias: low complexity. Basic and acidic residues predominate over residues 106-124 (KNPDPDPDPRNSQKPDLDP).

It is found in the nucleus. Functionally, transcription factor that binds specifically to a 5'-AA[AG]G-3' consensus core sequence. This chain is Dof zinc finger protein DOF3.1 (DOF3.1), found in Arabidopsis thaliana (Mouse-ear cress).